The primary structure comprises 287 residues: Large ribosomal subunit protein uL2 (287 aa).

Residues 221-287 (RGSVMNPCDH…SKRSRGGRDS (67 aa)) form a disordered region. The segment covering 258–287 (KTRKRNKPSNRFVLRKRRRTSKRSRGGRDS) has biased composition (basic residues).

This sequence belongs to the universal ribosomal protein uL2 family. Part of the 50S ribosomal subunit. Forms a bridge to the 30S subunit in the 70S ribosome.

In terms of biological role, one of the primary rRNA binding proteins. Required for association of the 30S and 50S subunits to form the 70S ribosome, for tRNA binding and peptide bond formation. It has been suggested to have peptidyltransferase activity; this is somewhat controversial. Makes several contacts with the 16S rRNA in the 70S ribosome. In Prochlorococcus marinus (strain MIT 9303), this protein is Large ribosomal subunit protein uL2.